Here is a 62-residue protein sequence, read N- to C-terminus: MIPVRCFTCGKVISPAWEEYKARREKGEDPKKILDDLGITRYCCRRMLLTHKEIIDELNPYQ.

Residues Cys-6, Cys-9, Cys-43, and Cys-44 each contribute to the Zn(2+) site.

It belongs to the archaeal Rpo10/eukaryotic RPB10 RNA polymerase subunit family. In terms of assembly, part of the RNA polymerase complex. Requires Zn(2+) as cofactor.

Its subcellular location is the cytoplasm. The catalysed reaction is RNA(n) + a ribonucleoside 5'-triphosphate = RNA(n+1) + diphosphate. Its function is as follows. DNA-dependent RNA polymerase (RNAP) catalyzes the transcription of DNA into RNA using the four ribonucleoside triphosphates as substrates. This Methanoregula boonei (strain DSM 21154 / JCM 14090 / 6A8) protein is DNA-directed RNA polymerase subunit Rpo10.